Here is a 250-residue protein sequence, read N- to C-terminus: Ribosomal RNA small subunit methyltransferase J (250 aa).

Residues 101–102 (RD), 117–118 (ER), 153–154 (SS), and Asp-171 contribute to the S-adenosyl-L-methionine site.

It belongs to the methyltransferase superfamily. RsmJ family.

It is found in the cytoplasm. It catalyses the reaction guanosine(1516) in 16S rRNA + S-adenosyl-L-methionine = N(2)-methylguanosine(1516) in 16S rRNA + S-adenosyl-L-homocysteine + H(+). Specifically methylates the guanosine in position 1516 of 16S rRNA. The sequence is that of Ribosomal RNA small subunit methyltransferase J from Shigella flexneri serotype 5b (strain 8401).